The primary structure comprises 285 residues: MSIYLIALLPVLGWGFMPIIANLRKSTPEEQLLGTSISALLFAFILFWILSPEITVLSFIVSFVSGIFWSFGQLLQFKGIAASSVAKAMPISNGTQLVGATLFAVLVFQEWQTVTAVIIGVVAVILILIGVVMTGFQKRGNHITESVSFHVYGIVILSSFFLTLYVVTNQLFDVTGFSIILPQAIGMLTCAIGINLAKKTAISRKNVTFNLMTGLSWSIANLGMFLATAVLGVATSFSISQACVIVATIGGILIFKQKKSPLEWTFILSGILLIMVGVVFLSLLK.

The next 9 membrane-spanning stretches (helical) occupy residues 2–21, 31–50, 55–77, 111–133, 146–168, 172–194, 207–229, 233–255, and 262–284; these read SIYL…PIIA, QLLG…FWIL, TVLS…LLQF, WQTV…GVVM, SVSF…YVVT, FDVT…AIGI, VTFN…LATA, VATS…ILIF, and LEWT…LSLL.

It belongs to the GRP transporter (TC 2.A.7.5) family.

It localises to the cell membrane. In Listeria innocua serovar 6a (strain ATCC BAA-680 / CLIP 11262), this protein is Putative sugar uptake protein lin0444.